The sequence spans 212 residues: Large ribosomal subunit protein uL3 (212 aa).

Residues 139 to 153 (LSHRVTGSIGQNQTP) are compositionally biased toward polar residues. The disordered stretch occupies residues 139–161 (LSHRVTGSIGQNQTPGKVFKGKK). N5-methylglutamine is present on Q151.

Belongs to the universal ribosomal protein uL3 family. In terms of assembly, part of the 50S ribosomal subunit. Forms a cluster with proteins L14 and L19. Methylated by PrmB.

In terms of biological role, one of the primary rRNA binding proteins, it binds directly near the 3'-end of the 23S rRNA, where it nucleates assembly of the 50S subunit. This Baumannia cicadellinicola subsp. Homalodisca coagulata protein is Large ribosomal subunit protein uL3.